The chain runs to 198 residues: Thymidylate kinase (198 aa).

10–17 is an ATP binding site; it reads GLDGSGKT.

The protein belongs to the thymidylate kinase family.

It catalyses the reaction dTMP + ATP = dTDP + ADP. Its function is as follows. Phosphorylation of dTMP to form dTDP in both de novo and salvage pathways of dTTP synthesis. This Thermus thermophilus (strain ATCC BAA-163 / DSM 7039 / HB27) protein is Thymidylate kinase.